An 81-amino-acid polypeptide reads, in one-letter code: Mipartoxin-2 (81 aa).

An N-terminal signal peptide occupies residues 1-21; the sequence is MKTLLLTLVVVTIVCLDLGNS. Intrachain disulfides connect cysteine 24–cysteine 42, cysteine 35–cysteine 61, cysteine 65–cysteine 73, and cysteine 74–cysteine 79.

It belongs to the three-finger toxin family. Short-chain subfamily. Expressed by the venom gland.

It localises to the secreted. Its function is as follows. Snake venom neurotoxin that blocks neuromuscular transmission, presenting a postsynaptic action through the nicotinic acetylcholine receptor (nAChR). Has no cytotoxic activity. This is Mipartoxin-2 from Micrurus mipartitus (Red-tailed coral snake).